We begin with the raw amino-acid sequence, 462 residues long: Protein ultraspiracle homolog (462 aa).

Positions methionine 1–leucine 113 are modulating. 2 consecutive NR C4-type zinc fingers follow at residues cysteine 114 to cysteine 134 and cysteine 150 to cysteine 174. The nuclear receptor DNA-binding region spans cysteine 114–methionine 179. The tract at residues lysine 180–serine 201 is hinge. Positions valine 204–histidine 453 constitute an NR LBD domain.

The protein belongs to the nuclear hormone receptor family. NR2 subfamily. Heterodimer of USP and ECR. As to expression, abundant expression seen in males and ovaries.

Its subcellular location is the nucleus. This is Protein ultraspiracle homolog (USP) from Bombyx mori (Silk moth).